The primary structure comprises 239 residues: MARTKKANDEVPTNSDSLKLKVAKQAAKLVKDEMVVGLGSGSTANLFIQELGKRIVEEELYIYGVPTSFDSRMVASTAGIPLISLDQCGEIDIAVDGADEVCKSTLSLIKGGGGCHTMEKIVDYHAKEFIVLADEGKLVDSLGDKTPVPLEVIPFAYSTVLNKLLKMNTAPAIRTGSGKMGPVITDSGNMIIDVFISIDDAEETENMLNNIPGVLENGVFSKCDKVLVGTSKKVEILKK.

Residues 40-43 (SGST), 96-99 (DGAD), and 110-113 (KGGG) each bind substrate. Residue Glu119 is the Proton acceptor of the active site. Position 137 (Lys137) interacts with substrate.

The protein belongs to the ribose 5-phosphate isomerase family. Homodimer.

It catalyses the reaction aldehydo-D-ribose 5-phosphate = D-ribulose 5-phosphate. The protein operates within carbohydrate degradation; pentose phosphate pathway; D-ribose 5-phosphate from D-ribulose 5-phosphate (non-oxidative stage): step 1/1. Catalyzes the reversible conversion of ribose-5-phosphate to ribulose 5-phosphate. The protein is Ribose-5-phosphate isomerase A of Methanococcus maripaludis (strain C5 / ATCC BAA-1333).